Consider the following 254-residue polypeptide: 5'-nucleotidase SurE (254 aa).

4 residues coordinate a divalent metal cation: Asp8, Asp9, Ser40, and Asn93.

The protein belongs to the SurE nucleotidase family. Requires a divalent metal cation as cofactor.

The protein localises to the cytoplasm. The enzyme catalyses a ribonucleoside 5'-phosphate + H2O = a ribonucleoside + phosphate. Its function is as follows. Nucleotidase that shows phosphatase activity on nucleoside 5'-monophosphates. The sequence is that of 5'-nucleotidase SurE from Methylorubrum extorquens (strain CM4 / NCIMB 13688) (Methylobacterium extorquens).